Consider the following 608-residue polypeptide: 1-deoxy-D-xylulose-5-phosphate synthase (608 aa).

Residues H66 and 107-109 contribute to the thiamine diphosphate site; that span reads GHA. Mg(2+) is bound at residue D138. Residues 139–140, N167, F277, and E350 contribute to the thiamine diphosphate site; that span reads GA. Residue N167 participates in Mg(2+) binding.

It belongs to the transketolase family. DXPS subfamily. As to quaternary structure, homodimer. The cofactor is Mg(2+). Thiamine diphosphate serves as cofactor.

It carries out the reaction D-glyceraldehyde 3-phosphate + pyruvate + H(+) = 1-deoxy-D-xylulose 5-phosphate + CO2. The protein operates within metabolic intermediate biosynthesis; 1-deoxy-D-xylulose 5-phosphate biosynthesis; 1-deoxy-D-xylulose 5-phosphate from D-glyceraldehyde 3-phosphate and pyruvate: step 1/1. Its function is as follows. Catalyzes the acyloin condensation reaction between C atoms 2 and 3 of pyruvate and glyceraldehyde 3-phosphate to yield 1-deoxy-D-xylulose-5-phosphate (DXP). The polypeptide is 1-deoxy-D-xylulose-5-phosphate synthase (Thermotoga sp. (strain RQ2)).